The sequence spans 461 residues: Bifunctional protein GlmU (461 aa).

The interval 1–229 (MEKYVVVLAA…FSESLGVNDR (229 aa)) is pyrophosphorylase. Residues 8–11 (LAAG), lysine 22, glutamine 72, and 77–78 (GT) each bind UDP-N-acetyl-alpha-D-glucosamine. Aspartate 102 is a Mg(2+) binding site. UDP-N-acetyl-alpha-D-glucosamine contacts are provided by glycine 139, glutamate 154, asparagine 169, and asparagine 227. Residue asparagine 227 coordinates Mg(2+). The segment at 230–250 (IALAEATRIMQRRINEGHMRD) is linker. An N-acetyltransferase region spans residues 251–461 (GVTFIDPATA…LPLSEDEEWK (211 aa)). Residues arginine 332 and lysine 350 each contribute to the UDP-N-acetyl-alpha-D-glucosamine site. The active-site Proton acceptor is the histidine 362. 2 residues coordinate UDP-N-acetyl-alpha-D-glucosamine: tyrosine 365 and asparagine 376. Residues alanine 422 and arginine 439 each coordinate acetyl-CoA.

It in the N-terminal section; belongs to the N-acetylglucosamine-1-phosphate uridyltransferase family. In the C-terminal section; belongs to the transferase hexapeptide repeat family. Homotrimer. It depends on Mg(2+) as a cofactor.

The protein resides in the cytoplasm. The catalysed reaction is alpha-D-glucosamine 1-phosphate + acetyl-CoA = N-acetyl-alpha-D-glucosamine 1-phosphate + CoA + H(+). The enzyme catalyses N-acetyl-alpha-D-glucosamine 1-phosphate + UTP + H(+) = UDP-N-acetyl-alpha-D-glucosamine + diphosphate. Its pathway is nucleotide-sugar biosynthesis; UDP-N-acetyl-alpha-D-glucosamine biosynthesis; N-acetyl-alpha-D-glucosamine 1-phosphate from alpha-D-glucosamine 6-phosphate (route II): step 2/2. It functions in the pathway nucleotide-sugar biosynthesis; UDP-N-acetyl-alpha-D-glucosamine biosynthesis; UDP-N-acetyl-alpha-D-glucosamine from N-acetyl-alpha-D-glucosamine 1-phosphate: step 1/1. The protein operates within bacterial outer membrane biogenesis; LPS lipid A biosynthesis. Functionally, catalyzes the last two sequential reactions in the de novo biosynthetic pathway for UDP-N-acetylglucosamine (UDP-GlcNAc). The C-terminal domain catalyzes the transfer of acetyl group from acetyl coenzyme A to glucosamine-1-phosphate (GlcN-1-P) to produce N-acetylglucosamine-1-phosphate (GlcNAc-1-P), which is converted into UDP-GlcNAc by the transfer of uridine 5-monophosphate (from uridine 5-triphosphate), a reaction catalyzed by the N-terminal domain. The protein is Bifunctional protein GlmU of Lactobacillus delbrueckii subsp. bulgaricus (strain ATCC BAA-365 / Lb-18).